Here is a 103-residue protein sequence, read N- to C-terminus: Enhancer of rudimentary homolog (103 aa).

It belongs to the E(R) family. Homodimer.

May have a role in the cell cycle. This chain is Enhancer of rudimentary homolog, found in Aedes aegypti (Yellowfever mosquito).